The following is a 292-amino-acid chain: Probable 2-(5''-triphosphoribosyl)-3'-dephosphocoenzyme-A synthase (292 aa).

This sequence belongs to the CitG/MdcB family.

It carries out the reaction 3'-dephospho-CoA + ATP = 2'-(5''-triphospho-alpha-D-ribosyl)-3'-dephospho-CoA + adenine. This chain is Probable 2-(5''-triphosphoribosyl)-3'-dephosphocoenzyme-A synthase, found in Shigella flexneri serotype 5b (strain 8401).